Consider the following 146-residue polypeptide: Large ribosomal subunit protein uL15 (146 aa).

Over residues 1–13 the composition is skewed to basic and acidic residues; that stretch reads MKLHELKPAEGSR. A disordered region spans residues 1-48; it reads MKLHELKPAEGSRKVRNRVGRGIGSGNGKTAGKGHKGQNARSGGGVRL. Gly residues predominate over residues 21–31; that stretch reads RGIGSGNGKTA.

Belongs to the universal ribosomal protein uL15 family. As to quaternary structure, part of the 50S ribosomal subunit.

Its function is as follows. Binds to the 23S rRNA. In Bacillus cytotoxicus (strain DSM 22905 / CIP 110041 / 391-98 / NVH 391-98), this protein is Large ribosomal subunit protein uL15.